The sequence spans 53 residues: ATP synthase protein 8 (53 aa).

A helical transmembrane segment spans residues 6–26; sequence PIGWLSLFIIFSLTFILFSMM.

The protein belongs to the ATPase protein 8 family. In terms of assembly, F-type ATPases have 2 components, CF(1) - the catalytic core - and CF(0) - the membrane proton channel.

The protein localises to the mitochondrion membrane. In terms of biological role, mitochondrial membrane ATP synthase (F(1)F(0) ATP synthase or Complex V) produces ATP from ADP in the presence of a proton gradient across the membrane which is generated by electron transport complexes of the respiratory chain. F-type ATPases consist of two structural domains, F(1) - containing the extramembraneous catalytic core and F(0) - containing the membrane proton channel, linked together by a central stalk and a peripheral stalk. During catalysis, ATP synthesis in the catalytic domain of F(1) is coupled via a rotary mechanism of the central stalk subunits to proton translocation. Part of the complex F(0) domain. Minor subunit located with subunit a in the membrane. The chain is ATP synthase protein 8 (mt:ATPase8) from Ceratitis capitata (Mediterranean fruit fly).